Consider the following 521-residue polypeptide: GMP synthase [glutamine-hydrolyzing] (521 aa).

The Glutamine amidotransferase type-1 domain maps to 5–197 (KILILDFGSQ…VLDICGAQPG (193 aa)). The Nucleophile role is filled by Cys81. Catalysis depends on residues His171 and Glu173. In terms of domain architecture, GMPS ATP-PPase spans 198–390 (WTMPNYIEEA…LGLPREMVYR (193 aa)). 225-231 (SGGVDSS) is an ATP binding site.

In terms of assembly, homodimer.

The catalysed reaction is XMP + L-glutamine + ATP + H2O = GMP + L-glutamate + AMP + diphosphate + 2 H(+). It functions in the pathway purine metabolism; GMP biosynthesis; GMP from XMP (L-Gln route): step 1/1. Functionally, catalyzes the synthesis of GMP from XMP. The protein is GMP synthase [glutamine-hydrolyzing] of Neisseria meningitidis serogroup C (strain 053442).